The primary structure comprises 398 residues: 1-deoxy-D-xylulose 5-phosphate reductoisomerase (398 aa).

Threonine 10, glycine 11, serine 12, valine 13, glycine 36, arginine 37, asparagine 38, and asparagine 124 together coordinate NADPH. Lysine 125 serves as a coordination point for 1-deoxy-D-xylulose 5-phosphate. Residue glutamate 126 participates in NADPH binding. Residue aspartate 150 coordinates Mn(2+). Residues serine 151, glutamate 152, serine 186, and histidine 209 each contribute to the 1-deoxy-D-xylulose 5-phosphate site. Glutamate 152 contributes to the Mn(2+) binding site. Position 215 (glycine 215) interacts with NADPH. 1-deoxy-D-xylulose 5-phosphate-binding residues include serine 222, asparagine 227, lysine 228, and glutamate 231. Residue glutamate 231 coordinates Mn(2+).

The protein belongs to the DXR family. Homodimer. Mg(2+) serves as cofactor. The cofactor is Mn(2+).

It carries out the reaction 2-C-methyl-D-erythritol 4-phosphate + NADP(+) = 1-deoxy-D-xylulose 5-phosphate + NADPH + H(+). The protein operates within isoprenoid biosynthesis; isopentenyl diphosphate biosynthesis via DXP pathway; isopentenyl diphosphate from 1-deoxy-D-xylulose 5-phosphate: step 1/6. In terms of biological role, catalyzes the NADPH-dependent rearrangement and reduction of 1-deoxy-D-xylulose-5-phosphate (DXP) to 2-C-methyl-D-erythritol 4-phosphate (MEP). The sequence is that of 1-deoxy-D-xylulose 5-phosphate reductoisomerase from Serratia proteamaculans (strain 568).